The sequence spans 297 residues: 4-hydroxy-tetrahydrodipicolinate synthase (297 aa).

Threonine 49 contributes to the pyruvate binding site. Tyrosine 137 acts as the Proton donor/acceptor in catalysis. Residue lysine 166 is the Schiff-base intermediate with substrate of the active site. Isoleucine 208 provides a ligand contact to pyruvate.

Belongs to the DapA family. As to quaternary structure, homotetramer; dimer of dimers.

It localises to the cytoplasm. The enzyme catalyses L-aspartate 4-semialdehyde + pyruvate = (2S,4S)-4-hydroxy-2,3,4,5-tetrahydrodipicolinate + H2O + H(+). It participates in amino-acid biosynthesis; L-lysine biosynthesis via DAP pathway; (S)-tetrahydrodipicolinate from L-aspartate: step 3/4. In terms of biological role, catalyzes the condensation of (S)-aspartate-beta-semialdehyde [(S)-ASA] and pyruvate to 4-hydroxy-tetrahydrodipicolinate (HTPA). In Phocaeicola vulgatus (strain ATCC 8482 / DSM 1447 / JCM 5826 / CCUG 4940 / NBRC 14291 / NCTC 11154) (Bacteroides vulgatus), this protein is 4-hydroxy-tetrahydrodipicolinate synthase.